The sequence spans 282 residues: Parvulin-like PPIase (282 aa).

Positions 1-20 (MKKLSVIFLSVSMLSSIAFC) are cleaved as a signal peptide. One can recognise a PpiC domain in the interval 138–231 (KEQIKVAHIL…FGWHIIKVLE (94 aa)).

This sequence belongs to the PpiC/parvulin rotamase family.

It localises to the cell outer membrane. It carries out the reaction [protein]-peptidylproline (omega=180) = [protein]-peptidylproline (omega=0). This chain is Parvulin-like PPIase (plp), found in Rickettsia typhi (strain ATCC VR-144 / Wilmington).